A 291-amino-acid chain; its full sequence is 33 kDa chaperonin (291 aa).

Disulfide bonds link Cys235–Cys237 and Cys268–Cys271.

The protein belongs to the HSP33 family. In terms of processing, under oxidizing conditions two disulfide bonds are formed involving the reactive cysteines. Under reducing conditions zinc is bound to the reactive cysteines and the protein is inactive.

Its subcellular location is the cytoplasm. Functionally, redox regulated molecular chaperone. Protects both thermally unfolding and oxidatively damaged proteins from irreversible aggregation. Plays an important role in the bacterial defense system toward oxidative stress. The protein is 33 kDa chaperonin of Bacillus velezensis (strain DSM 23117 / BGSC 10A6 / LMG 26770 / FZB42) (Bacillus amyloliquefaciens subsp. plantarum).